Consider the following 437-residue polypeptide: Ribosomal protein uS12 methylthiotransferase RimO (437 aa).

The MTTase N-terminal domain occupies 5-116 (PTISVSHLGC…IAEVIQRVET (112 aa)). 6 residues coordinate [4Fe-4S] cluster: cysteine 14, cysteine 50, cysteine 79, cysteine 154, cysteine 158, and cysteine 161. The region spanning 140 to 369 (TTNEAVAYLR…MEIQQPIAAK (230 aa)) is the Radical SAM core domain. A TRAM domain is found at 372–437 (QKCVGQTVEV…DVYDLYGKVI (66 aa)).

The protein belongs to the methylthiotransferase family. RimO subfamily. The cofactor is [4Fe-4S] cluster.

The protein localises to the cytoplasm. It carries out the reaction L-aspartate(89)-[ribosomal protein uS12]-hydrogen + (sulfur carrier)-SH + AH2 + 2 S-adenosyl-L-methionine = 3-methylsulfanyl-L-aspartate(89)-[ribosomal protein uS12]-hydrogen + (sulfur carrier)-H + 5'-deoxyadenosine + L-methionine + A + S-adenosyl-L-homocysteine + 2 H(+). Its function is as follows. Catalyzes the methylthiolation of an aspartic acid residue of ribosomal protein uS12. This Crocosphaera subtropica (strain ATCC 51142 / BH68) (Cyanothece sp. (strain ATCC 51142)) protein is Ribosomal protein uS12 methylthiotransferase RimO.